The sequence spans 219 residues: Small ribosomal subunit protein uS3c (219 aa).

The KH type-2 domain occupies Ile-43–Glu-118.

It belongs to the universal ribosomal protein uS3 family. As to quaternary structure, part of the 30S ribosomal subunit.

It localises to the plastid. The polypeptide is Small ribosomal subunit protein uS3c (rps3) (Cuscuta exaltata (Tall dodder)).